Here is a 594-residue protein sequence, read N- to C-terminus: DNA ligase (594 aa).

Residues 32-36 (DEEYD), 81-82 (SL), and Glu118 contribute to the NAD(+) site. Lys120 functions as the N6-AMP-lysine intermediate in the catalytic mechanism. Arg141, Glu181, Lys299, and Lys323 together coordinate NAD(+). 4 residues coordinate Zn(2+): Cys417, Cys420, Cys436, and Cys442.

This sequence belongs to the NAD-dependent DNA ligase family. LigA subfamily. It depends on Mg(2+) as a cofactor. Requires Mn(2+) as cofactor.

It carries out the reaction NAD(+) + (deoxyribonucleotide)n-3'-hydroxyl + 5'-phospho-(deoxyribonucleotide)m = (deoxyribonucleotide)n+m + AMP + beta-nicotinamide D-nucleotide.. Functionally, DNA ligase that catalyzes the formation of phosphodiester linkages between 5'-phosphoryl and 3'-hydroxyl groups in double-stranded DNA using NAD as a coenzyme and as the energy source for the reaction. It is essential for DNA replication and repair of damaged DNA. This is DNA ligase from Blochmanniella floridana.